A 172-amino-acid chain; its full sequence is Small ribosomal subunit protein uS5 (172 aa).

One can recognise an S5 DRBM domain in the interval 17 to 80; sequence LREKMISVNR…EQARRNMFKV (64 aa).

Belongs to the universal ribosomal protein uS5 family. In terms of assembly, part of the 30S ribosomal subunit. Contacts proteins S4 and S8.

In terms of biological role, with S4 and S12 plays an important role in translational accuracy. Functionally, located at the back of the 30S subunit body where it stabilizes the conformation of the head with respect to the body. This chain is Small ribosomal subunit protein uS5, found in Paraburkholderia xenovorans (strain LB400).